The sequence spans 662 residues: MEGAPTVRQVMNEGDSSLATDLQEDVEENPSPTVEENNVVVKKQGPNLHNWSGDWSFWISSSTYKDRNEEYRRQFTHLPDTERLIADYACALQRDILLQGRLYLSENWLCFYSNIFRWETTISIALKNITFMTKEKTARLIPNAIQIVTESEKFFFTSFGARDRSYLSIFRLWQNVLLDKSLTRQEFWQLLQQNYGTELGLNAEEMENLSLSIEDVQPRSPGRSSLDDSGERDEKLSKSISFTSESISRVSETESFDGNSSKGGLGKEESQNEKQTKKSLLPTLEKKLTRVPSKSLDLNKNEYLSLDKSSTSDSVDEENVPEKDLHGRLFINRIFHISADRMFELLFTSSRFMQKFASSRNIIDVVSTPWTAELGGDQLRTMTYTIVLNSPLTGKCTAATEKQTLYKESREARFYLVDSEVLTHDVPYHDYFYTVNRYCIIRSSKQKCRLRVSTDLKYRKQPWGLVKSLIEKNSWSSLEDYFKQLESDLLIEESVLNQAIEDPGKLTGLRRRRRTFNRTAETVPKLSSQHSSGDVGLGAKGDITGKKKEMENYNVTLIVVMSIFVLLLVLLNVTLFLKLSKIEHAAQSFYRLRLQEEKSLNLASDMVSRAETIQKNKDQAHRLKGVLRDSIVMLEQLKSSLIMLQKTFDLLNKNKTGMAVES.

Residues 1–34 (MEGAPTVRQVMNEGDSSLATDLQEDVEENPSPTV) form a disordered region. A GRAM domain is found at 69-136 (EEYRRQFTHL…KNITFMTKEK (68 aa)). Disordered regions lie at residues 212-237 (SIED…EKLS) and 249-284 (RVSE…LPTL). Over residues 265-276 (LGKEESQNEKQT) the composition is skewed to basic and acidic residues. In terms of domain architecture, VASt spans 326 to 497 (HGRLFINRIF…DLLIEESVLN (172 aa)). The chain crosses the membrane as a helical span at residues 557–577 (LIVVMSIFVLLLVLLNVTLFL).

It is found in the endoplasmic reticulum membrane. It localises to the cell membrane. In terms of biological role, cholesterol transporter that mediates non-vesicular transport of cholesterol from the plasma membrane (PM) to the endoplasmic reticulum (ER). Contains unique domains for binding cholesterol and the PM, thereby serving as a molecular bridge for the transfer of cholesterol from the PM to the ER. Plays a crucial role in cholesterol homeostasis and has the unique ability to localize to the PM based on the level of membrane cholesterol. In lipid-poor conditions localizes to the ER membrane and in response to excess cholesterol in the PM is recruited to the endoplasmic reticulum-plasma membrane contact sites (EPCS) which is mediated by the GRAM domain. At the EPCS, the sterol-binding VASt/ASTER domain binds to the cholesterol in the PM and facilitates its transfer from the PM to ER. The protein is Protein Aster-C (GRAMD1C) of Homo sapiens (Human).